Reading from the N-terminus, the 80-residue chain is Turripeptide VI/VII-01 (80 aa).

Residues 1–22 (MRLQLILTITLLLTSFMGYRDA) form the signal peptide. Residues 23 to 36 (AVIQGKTERSAMKM) constitute a propeptide that is removed on maturation. Disulfide bonds link C48-C61, C50-C65, and C60-C70. Positions 77–80 (SSAI) are excised as a propeptide.

In terms of tissue distribution, expressed by the venom duct.

The protein resides in the secreted. The polypeptide is Turripeptide VI/VII-01 (Gemmula speciosa (Splendid gem-turris)).